Consider the following 425-residue polypeptide: Serine hydroxymethyltransferase (425 aa).

(6S)-5,6,7,8-tetrahydrofolate-binding positions include leucine 128 and 132 to 134; that span reads GHL. Lysine 237 is subject to N6-(pyridoxal phosphate)lysine.

The protein belongs to the SHMT family. In terms of assembly, homodimer. The cofactor is pyridoxal 5'-phosphate.

Its subcellular location is the cytoplasm. It catalyses the reaction (6R)-5,10-methylene-5,6,7,8-tetrahydrofolate + glycine + H2O = (6S)-5,6,7,8-tetrahydrofolate + L-serine. The protein operates within one-carbon metabolism; tetrahydrofolate interconversion. Its pathway is amino-acid biosynthesis; glycine biosynthesis; glycine from L-serine: step 1/1. Catalyzes the reversible interconversion of serine and glycine with tetrahydrofolate (THF) serving as the one-carbon carrier. This reaction serves as the major source of one-carbon groups required for the biosynthesis of purines, thymidylate, methionine, and other important biomolecules. Also exhibits THF-independent aldolase activity toward beta-hydroxyamino acids, producing glycine and aldehydes, via a retro-aldol mechanism. The sequence is that of Serine hydroxymethyltransferase from Wolbachia pipientis subsp. Culex pipiens (strain wPip).